The chain runs to 181 residues: Inner membrane-spanning protein YciB (181 aa).

Helical transmembrane passes span Phe8–Ala28, Ile53–Phe73, Trp76–Gly96, Leu121–Phe141, and Phe149–Ile169.

The protein belongs to the YciB family.

It localises to the cell inner membrane. Its function is as follows. Plays a role in cell envelope biogenesis, maintenance of cell envelope integrity and membrane homeostasis. This Coxiella burnetii (strain CbuK_Q154) (Coxiella burnetii (strain Q154)) protein is Inner membrane-spanning protein YciB.